The primary structure comprises 388 residues: MRYLTSGESHGPQLTVIVEGVPANLEIKVEDINKEMFKRQGGYGRGRRMQIEKDTVEIVSGVRNGYTLGSPITMVVTNDDFTHWRKIMGAAPISDEERENMKRTITKPRPGHADLVGGMKYNHRDLRNVLERSSARETAARVAVGALCKVLLEQLDIEIYSRVVEIGGIKDKDFYDSETFKANLDRNDVRVIDDGIAQAMRDKIDEAKNDGDSIGGVVQVVVENMPVGVGSYVHYDRKLDGRIAQGVVSINAFKGVSFGEGFKAAEKPGSEIQDEILYNTELGYYRGSNHLGGLEGGMSNGMPIIVNGVMKPIPTLYKPLNSVDINTKEDFKATIERSDSCAVPAASIVCEHVVAFEIAKALLEEFQSNHIEQLQQQIADRRQLNVEF.

2 residues coordinate NADP(+): R39 and R45. FMN-binding positions include 132–134 (RSS), 251–252 (NA), G296, 311–315 (KPIPT), and R337.

Belongs to the chorismate synthase family. As to quaternary structure, homotetramer. Requires FMNH2 as cofactor.

It catalyses the reaction 5-O-(1-carboxyvinyl)-3-phosphoshikimate = chorismate + phosphate. It functions in the pathway metabolic intermediate biosynthesis; chorismate biosynthesis; chorismate from D-erythrose 4-phosphate and phosphoenolpyruvate: step 7/7. Catalyzes the anti-1,4-elimination of the C-3 phosphate and the C-6 proR hydrogen from 5-enolpyruvylshikimate-3-phosphate (EPSP) to yield chorismate, which is the branch point compound that serves as the starting substrate for the three terminal pathways of aromatic amino acid biosynthesis. This reaction introduces a second double bond into the aromatic ring system. The chain is Chorismate synthase from Staphylococcus aureus (strain MRSA252).